We begin with the raw amino-acid sequence, 145 residues long: D-aminoacyl-tRNA deacylase (145 aa).

Residues 137-138 carry the Gly-cisPro motif, important for rejection of L-amino acids motif; it reads GP.

Belongs to the DTD family. In terms of assembly, homodimer.

It is found in the cytoplasm. It catalyses the reaction glycyl-tRNA(Ala) + H2O = tRNA(Ala) + glycine + H(+). It carries out the reaction a D-aminoacyl-tRNA + H2O = a tRNA + a D-alpha-amino acid + H(+). Functionally, an aminoacyl-tRNA editing enzyme that deacylates mischarged D-aminoacyl-tRNAs. Also deacylates mischarged glycyl-tRNA(Ala), protecting cells against glycine mischarging by AlaRS. Acts via tRNA-based rather than protein-based catalysis; rejects L-amino acids rather than detecting D-amino acids in the active site. By recycling D-aminoacyl-tRNA to D-amino acids and free tRNA molecules, this enzyme counteracts the toxicity associated with the formation of D-aminoacyl-tRNA entities in vivo and helps enforce protein L-homochirality. The protein is D-aminoacyl-tRNA deacylase of Psychromonas ingrahamii (strain DSM 17664 / CCUG 51855 / 37).